Consider the following 628-residue polypeptide: (+)-alpha pinene synthase 1, chloroplastic (628 aa).

Mg(2+) contacts are provided by Asp-379, Asp-383, and Asp-531. A DDXXD motif motif is present at residues 379–383 (DDIYD).

The protein belongs to the terpene synthase family. Tpsd subfamily. Mg(2+) serves as cofactor. Mn(2+) is required as a cofactor.

It localises to the plastid. It is found in the chloroplast. It catalyses the reaction (2E)-geranyl diphosphate = (1R,5R)-alpha-pinene + diphosphate. It participates in terpene metabolism; oleoresin biosynthesis. Its pathway is secondary metabolite biosynthesis; terpenoid biosynthesis. Functionally, monoterpene synthase (TPS) involved in the biosynthesis of monoterpene natural products included in conifer oleoresin secretions and volatile emissions; these compounds contribute to biotic and abiotic stress defense against herbivores and pathogens. Catalyzes the conversion of (2E)-geranyl diphosphate (GPP) to (+)-alpha-pinene. In Pinus contorta (Shore pine), this protein is (+)-alpha pinene synthase 1, chloroplastic.